Reading from the N-terminus, the 969-residue chain is RNA polymerase-associated protein RapA (969 aa).

The Helicase ATP-binding domain maps to 162–339; the sequence is EVGQRVAPRV…FARLALLDAD (178 aa). ATP is bound at residue 175–182; it reads DEVGLGKT. The short motif at 285–288 is the DEAH box element; sequence DEAH. A Helicase C-terminal domain is found at 492–663; that stretch reads RIEWLITFLK…GFLKNPQAVG (172 aa).

This sequence belongs to the SNF2/RAD54 helicase family. RapA subfamily. As to quaternary structure, interacts with the RNAP. Has a higher affinity for the core RNAP than for the holoenzyme. Its ATPase activity is stimulated by binding to RNAP.

Transcription regulator that activates transcription by stimulating RNA polymerase (RNAP) recycling in case of stress conditions such as supercoiled DNA or high salt concentrations. Probably acts by releasing the RNAP, when it is trapped or immobilized on tightly supercoiled DNA. Does not activate transcription on linear DNA. Probably not involved in DNA repair. The polypeptide is RNA polymerase-associated protein RapA (Actinobacillus pleuropneumoniae serotype 7 (strain AP76)).